Reading from the N-terminus, the 884-residue chain is Alanine--tRNA ligase (884 aa).

Residues histidine 572, histidine 576, cysteine 673, and histidine 677 each contribute to the Zn(2+) site.

This sequence belongs to the class-II aminoacyl-tRNA synthetase family. Zn(2+) is required as a cofactor.

It is found in the cytoplasm. It carries out the reaction tRNA(Ala) + L-alanine + ATP = L-alanyl-tRNA(Ala) + AMP + diphosphate. Its function is as follows. Catalyzes the attachment of alanine to tRNA(Ala) in a two-step reaction: alanine is first activated by ATP to form Ala-AMP and then transferred to the acceptor end of tRNA(Ala). Also edits incorrectly charged Ser-tRNA(Ala) and Gly-tRNA(Ala) via its editing domain. This is Alanine--tRNA ligase from Xylella fastidiosa (strain M23).